The chain runs to 265 residues: TATA-box-binding protein (265 aa).

The segment at 1-40 is disordered; sequence MYNPSQAVPVSLHKNQDNQDGGQQRSHYPQISSQQSQSYL. A compositionally biased stretch (polar residues) spans 18-29; it reads NQDGGQQRSHYP. 2 tandem repeats follow at residues 91–167 and 181–258.

This sequence belongs to the TBP family. Belongs to the TFIID complex together with the TBP-associated factors (TAFs). Binds DNA as monomer.

It is found in the nucleus. Functionally, general transcription factor that functions at the core of the DNA-binding multiprotein factor TFIID. Binding of TFIID to the TATA box is the initial transcriptional step of the pre-initiation complex (PIC), playing a role in the activation of eukaryotic genes transcribed by RNA polymerase II. This is TATA-box-binding protein from Strongylocentrotus purpuratus (Purple sea urchin).